Reading from the N-terminus, the 287-residue chain is Lipoyl synthase (287 aa).

The [4Fe-4S] cluster site is built by Cys-38, Cys-43, Cys-49, Cys-64, Cys-68, Cys-71, and Ser-277. In terms of domain architecture, Radical SAM core spans 50-266 (WSRGTATFLL…KTVAESLGLR (217 aa)).

This sequence belongs to the radical SAM superfamily. Lipoyl synthase family. [4Fe-4S] cluster serves as cofactor.

It is found in the cytoplasm. It carries out the reaction [[Fe-S] cluster scaffold protein carrying a second [4Fe-4S](2+) cluster] + N(6)-octanoyl-L-lysyl-[protein] + 2 oxidized [2Fe-2S]-[ferredoxin] + 2 S-adenosyl-L-methionine + 4 H(+) = [[Fe-S] cluster scaffold protein] + N(6)-[(R)-dihydrolipoyl]-L-lysyl-[protein] + 4 Fe(3+) + 2 hydrogen sulfide + 2 5'-deoxyadenosine + 2 L-methionine + 2 reduced [2Fe-2S]-[ferredoxin]. Its pathway is protein modification; protein lipoylation via endogenous pathway; protein N(6)-(lipoyl)lysine from octanoyl-[acyl-carrier-protein]: step 2/2. In terms of biological role, catalyzes the radical-mediated insertion of two sulfur atoms into the C-6 and C-8 positions of the octanoyl moiety bound to the lipoyl domains of lipoate-dependent enzymes, thereby converting the octanoylated domains into lipoylated derivatives. The protein is Lipoyl synthase of Chlorobium phaeobacteroides (strain DSM 266 / SMG 266 / 2430).